Consider the following 513-residue polypeptide: RNA-splicing ligase RtcB homolog (513 aa).

5 residues coordinate Mn(2+): aspartate 127, cysteine 130, histidine 235, histidine 267, and histidine 361. Position 234–238 (234–238 (NHYAE)) interacts with GMP. GMP contacts are provided by residues 361–362 (HN), 410–413 (GGTM), serine 417, 436–439 (HGAG), and lysine 512. Histidine 436 (GMP-histidine intermediate) is an active-site residue.

Belongs to the RtcB family. In terms of assembly, catalytic component of the tRNA-splicing ligase complex. Mn(2+) is required as a cofactor.

It carries out the reaction a 3'-end 3'-phospho-ribonucleotide-RNA + a 5'-end dephospho-ribonucleoside-RNA + GTP = a ribonucleotidyl-ribonucleotide-RNA + GMP + diphosphate. It catalyses the reaction a 3'-end 2',3'-cyclophospho-ribonucleotide-RNA + a 5'-end dephospho-ribonucleoside-RNA + GTP + H2O = a ribonucleotidyl-ribonucleotide-RNA + GMP + diphosphate + H(+). Functionally, catalytic subunit of the tRNA-splicing ligase complex that acts by directly joining spliced tRNA halves to mature-sized tRNAs by incorporating the precursor-derived splice junction phosphate into the mature tRNA as a canonical 3',5'-phosphodiester. May act as an RNA ligase with broad substrate specificity, and may function toward other RNAs. The sequence is that of RNA-splicing ligase RtcB homolog from Micromonas commoda (strain RCC299 / NOUM17 / CCMP2709) (Picoplanktonic green alga).